A 480-amino-acid chain; its full sequence is Citrate synthase 1, peroxisomal (480 aa).

Catalysis depends on residues histidine 321, histidine 360, and aspartate 416.

Belongs to the citrate synthase family. As to expression, expressed only in siliques. Not expressed in flower, stem, cauline leaf, young leaf, mature leaf and senescent leaf.

It is found in the peroxisome. It catalyses the reaction oxaloacetate + acetyl-CoA + H2O = citrate + CoA + H(+). It functions in the pathway carbohydrate metabolism; tricarboxylic acid cycle; isocitrate from oxaloacetate: step 1/2. The protein is Citrate synthase 1, peroxisomal (CSY1) of Arabidopsis thaliana (Mouse-ear cress).